A 443-amino-acid chain; its full sequence is ATP-dependent protease ATPase subunit HslU (443 aa).

ATP-binding positions include isoleucine 18, glycine 60–glutamate 65, aspartate 256, glutamate 321, and arginine 393.

This sequence belongs to the ClpX chaperone family. HslU subfamily. As to quaternary structure, a double ring-shaped homohexamer of HslV is capped on each side by a ring-shaped HslU homohexamer. The assembly of the HslU/HslV complex is dependent on binding of ATP.

The protein resides in the cytoplasm. Functionally, ATPase subunit of a proteasome-like degradation complex; this subunit has chaperone activity. The binding of ATP and its subsequent hydrolysis by HslU are essential for unfolding of protein substrates subsequently hydrolyzed by HslV. HslU recognizes the N-terminal part of its protein substrates and unfolds these before they are guided to HslV for hydrolysis. In Tolumonas auensis (strain DSM 9187 / NBRC 110442 / TA 4), this protein is ATP-dependent protease ATPase subunit HslU.